The following is a 300-amino-acid chain: Porphobilinogen deaminase (300 aa).

Cys242 is modified (S-(dipyrrolylmethanemethyl)cysteine).

Belongs to the HMBS family. As to quaternary structure, monomer. Dipyrromethane is required as a cofactor.

It catalyses the reaction 4 porphobilinogen + H2O = hydroxymethylbilane + 4 NH4(+). Its pathway is porphyrin-containing compound metabolism; protoporphyrin-IX biosynthesis; coproporphyrinogen-III from 5-aminolevulinate: step 2/4. Its function is as follows. Tetrapolymerization of the monopyrrole PBG into the hydroxymethylbilane pre-uroporphyrinogen in several discrete steps. The protein is Porphobilinogen deaminase of Blochmanniella pennsylvanica (strain BPEN).